A 158-amino-acid polypeptide reads, in one-letter code: Ecotin-like protein 2 (158 aa).

It belongs to the protease inhibitor I11 (ecotin) family.

This is Ecotin-like protein 2 from Leishmania major.